A 314-amino-acid chain; its full sequence is Carbamate kinase (314 aa).

The protein belongs to the carbamate kinase family. As to quaternary structure, homodimer.

The enzyme catalyses hydrogencarbonate + NH4(+) + ATP = carbamoyl phosphate + ADP + H2O + H(+). It participates in metabolic intermediate metabolism; carbamoyl phosphate degradation; CO(2) and NH(3) from carbamoyl phosphate: step 1/1. This chain is Carbamate kinase (CBK), found in Trichomonas vaginalis.